Consider the following 382-residue polypeptide: Homeobox protein bagpipe (382 aa).

Disordered regions lie at residues 27 to 66, 144 to 178, and 314 to 382; these read NDIL…SKSP, TSND…KKRS, and QPIP…VEID. The span at 48-62 shows a compositional bias: basic and acidic residues; the sequence is EPEKLKPSSDRERSI. Residues 158–170 are compositionally biased toward low complexity; it reads SSPSESPLSHDGS. The homeobox DNA-binding region spans 175-234; it reads KKRSRAAFSHAQVFELERRFAQQRYLSGPERSEMAKSLRLTETQVKIWFQNRRYKTKRKQ. The segment covering 321–335 has biased composition (low complexity); it reads QSSSFVTASSASSSP. Over residues 373–382 the composition is skewed to acidic residues; sequence EDVDENVEID.

It belongs to the NK-3 homeobox family. As to expression, is expressed in a segmented pattern in visceral muscle and in a subset of cardiac muscles. Loss of activity results in segmental gaps in midgut visceral muscle.

The protein resides in the nucleus. Involved in the determination of cell fates in the dorsal mesoderm. The sequence is that of Homeobox protein bagpipe (bap) from Drosophila melanogaster (Fruit fly).